The primary structure comprises 217 residues: Imidazole glycerol phosphate synthase subunit HisH (217 aa).

Residues methionine 1 to glutamate 212 form the Glutamine amidotransferase type-1 domain. Residue cysteine 79 is the Nucleophile of the active site. Active-site residues include histidine 187 and glutamate 189.

As to quaternary structure, heterodimer of HisH and HisF.

It localises to the cytoplasm. It carries out the reaction 5-[(5-phospho-1-deoxy-D-ribulos-1-ylimino)methylamino]-1-(5-phospho-beta-D-ribosyl)imidazole-4-carboxamide + L-glutamine = D-erythro-1-(imidazol-4-yl)glycerol 3-phosphate + 5-amino-1-(5-phospho-beta-D-ribosyl)imidazole-4-carboxamide + L-glutamate + H(+). It catalyses the reaction L-glutamine + H2O = L-glutamate + NH4(+). It participates in amino-acid biosynthesis; L-histidine biosynthesis; L-histidine from 5-phospho-alpha-D-ribose 1-diphosphate: step 5/9. In terms of biological role, IGPS catalyzes the conversion of PRFAR and glutamine to IGP, AICAR and glutamate. The HisH subunit catalyzes the hydrolysis of glutamine to glutamate and ammonia as part of the synthesis of IGP and AICAR. The resulting ammonia molecule is channeled to the active site of HisF. The sequence is that of Imidazole glycerol phosphate synthase subunit HisH from Desulfovibrio desulfuricans (strain ATCC 27774 / DSM 6949 / MB).